The chain runs to 201 residues: Large ribosomal subunit protein uL4 (201 aa).

The segment at 45–75 is disordered; sequence AQKSRSEVSGSGKKPWRQKGTGRARSGSLRS.

The protein belongs to the universal ribosomal protein uL4 family. As to quaternary structure, part of the 50S ribosomal subunit.

One of the primary rRNA binding proteins, this protein initially binds near the 5'-end of the 23S rRNA. It is important during the early stages of 50S assembly. It makes multiple contacts with different domains of the 23S rRNA in the assembled 50S subunit and ribosome. Functionally, forms part of the polypeptide exit tunnel. The sequence is that of Large ribosomal subunit protein uL4 from Buchnera aphidicola subsp. Cinara cedri (strain Cc).